The following is a 122-amino-acid chain: Aspartate 1-decarboxylase (122 aa).

Residue S25 is the Schiff-base intermediate with substrate; via pyruvic acid of the active site. S25 bears the Pyruvic acid (Ser) mark. T57 is a substrate binding site. Y58 acts as the Proton donor in catalysis. 73-75 provides a ligand contact to substrate; the sequence is GAA.

The protein belongs to the PanD family. In terms of assembly, heterooctamer of four alpha and four beta subunits. Requires pyruvate as cofactor. Is synthesized initially as an inactive proenzyme, which is activated by self-cleavage at a specific serine bond to produce a beta-subunit with a hydroxyl group at its C-terminus and an alpha-subunit with a pyruvoyl group at its N-terminus.

Its subcellular location is the cytoplasm. It catalyses the reaction L-aspartate + H(+) = beta-alanine + CO2. It participates in cofactor biosynthesis; (R)-pantothenate biosynthesis; beta-alanine from L-aspartate: step 1/1. Catalyzes the pyruvoyl-dependent decarboxylation of aspartate to produce beta-alanine. The protein is Aspartate 1-decarboxylase of Bordetella pertussis (strain Tohama I / ATCC BAA-589 / NCTC 13251).